The following is a 246-amino-acid chain: Orotidine 5'-phosphate decarboxylase (246 aa).

Residues aspartate 22, lysine 44, 71 to 80, threonine 130, arginine 191, glutamine 201, glycine 221, and arginine 222 each bind substrate; that span reads DLKYHDIPHT. Lysine 73 serves as the catalytic Proton donor.

The protein belongs to the OMP decarboxylase family. Type 1 subfamily. In terms of assembly, homodimer.

The enzyme catalyses orotidine 5'-phosphate + H(+) = UMP + CO2. The protein operates within pyrimidine metabolism; UMP biosynthesis via de novo pathway; UMP from orotate: step 2/2. Its function is as follows. Catalyzes the decarboxylation of orotidine 5'-monophosphate (OMP) to uridine 5'-monophosphate (UMP). The protein is Orotidine 5'-phosphate decarboxylase of Neisseria meningitidis serogroup A / serotype 4A (strain DSM 15465 / Z2491).